A 328-amino-acid polypeptide reads, in one-letter code: Malate dehydrogenase (328 aa).

12–18 is a binding site for NAD(+); the sequence is GAAGQIG. Substrate contacts are provided by Arg-93 and Arg-99. NAD(+) contacts are provided by residues Asn-106, Gln-113, and 130–132; that span reads VGN. 2 residues coordinate substrate: Asn-132 and Arg-163. His-188 (proton acceptor) is an active-site residue.

This sequence belongs to the LDH/MDH superfamily. MDH type 2 family.

The enzyme catalyses (S)-malate + NAD(+) = oxaloacetate + NADH + H(+). In terms of biological role, catalyzes the reversible oxidation of malate to oxaloacetate. The sequence is that of Malate dehydrogenase from Saccharopolyspora erythraea (strain ATCC 11635 / DSM 40517 / JCM 4748 / NBRC 13426 / NCIMB 8594 / NRRL 2338).